The following is a 535-amino-acid chain: CTP synthase (535 aa).

Positions 1–267 are amidoligase domain; that stretch reads MTKYIFVTGG…DQIVCDHLKL (267 aa). Ser-13 is a binding site for CTP. Position 13 (Ser-13) interacts with UTP. An ATP-binding site is contributed by 14–19; the sequence is SLGKGI. Tyr-54 contacts L-glutamine. Asp-71 lines the ATP pocket. Mg(2+) contacts are provided by Asp-71 and Glu-141. CTP-binding positions include 148-150, 188-193, and Lys-224; these read DIE and KTKPTQ. UTP contacts are provided by residues 188–193 and Lys-224; that span reads KTKPTQ. Residue 240-242 participates in ATP binding; it reads RDA. Residues 292–534 form the Glutamine amidotransferase type-1 domain; sequence KIALVGKYVE…VKASLTNKES (243 aa). Position 354 (Gly-354) interacts with L-glutamine. Cys-381 serves as the catalytic Nucleophile; for glutamine hydrolysis. L-glutamine-binding positions include 382–385, Glu-405, and Arg-462; that span reads LGMQ. Catalysis depends on residues His-507 and Glu-509.

The protein belongs to the CTP synthase family. Homotetramer.

It catalyses the reaction UTP + L-glutamine + ATP + H2O = CTP + L-glutamate + ADP + phosphate + 2 H(+). The catalysed reaction is L-glutamine + H2O = L-glutamate + NH4(+). The enzyme catalyses UTP + NH4(+) + ATP = CTP + ADP + phosphate + 2 H(+). It functions in the pathway pyrimidine metabolism; CTP biosynthesis via de novo pathway; CTP from UDP: step 2/2. With respect to regulation, allosterically activated by GTP, when glutamine is the substrate; GTP has no effect on the reaction when ammonia is the substrate. The allosteric effector GTP functions by stabilizing the protein conformation that binds the tetrahedral intermediate(s) formed during glutamine hydrolysis. Inhibited by the product CTP, via allosteric rather than competitive inhibition. Functionally, catalyzes the ATP-dependent amination of UTP to CTP with either L-glutamine or ammonia as the source of nitrogen. Regulates intracellular CTP levels through interactions with the four ribonucleotide triphosphates. The protein is CTP synthase of Bacillus anthracis (strain A0248).